Consider the following 221-residue polypeptide: Flagellar L-ring protein 2 (221 aa).

The first 16 residues, 1–16 (MKRFLILTPMVLALCG), serve as a signal peptide directing secretion. Cys17 is lipidated: N-palmitoyl cysteine. The S-diacylglycerol cysteine moiety is linked to residue Cys17.

Belongs to the FlgH family. In terms of assembly, the basal body constitutes a major portion of the flagellar organelle and consists of four rings (L,P,S, and M) mounted on a central rod.

It localises to the cell outer membrane. The protein resides in the bacterial flagellum basal body. Functionally, assembles around the rod to form the L-ring and probably protects the motor/basal body from shearing forces during rotation. The protein is Flagellar L-ring protein 2 of Yersinia pseudotuberculosis serotype I (strain IP32953).